We begin with the raw amino-acid sequence, 274 residues long: Mitochondrial outer membrane protein porin 4 (274 aa).

Position 2 is an N-acetylglycine (Gly-2). The residue at position 76 (Ser-76) is a Phosphoserine.

The protein belongs to the eukaryotic mitochondrial porin (TC 1.B.8.1) family. As to expression, widely expressed.

The protein resides in the cell membrane. The protein localises to the mitochondrion outer membrane. In terms of biological role, forms a channel through the mitochondrial outer membrane that allows diffusion of small hydrophilic molecules. The channel adopts an open conformation at low or zero membrane potential and a closed conformation at potentials above 30-40 mV. The open state has a weak anion selectivity whereas the closed state is cation-selective. Involved in plant growth and development at the vegetative and reproductive stages. Is important for leaf and pollen development and mitochondrial membrane potential steady state. May be involved in disease resistance. This is Mitochondrial outer membrane protein porin 4 (VDAC4) from Arabidopsis thaliana (Mouse-ear cress).